The chain runs to 222 residues: Interleukin-12 subunit alpha (222 aa).

An N-terminal signal peptide occupies residues 1–25 (MCPLRSLFLMATLVFLNHLDHLSLA). 3 disulfide bridges follow: Cys-40–Cys-113, Cys-67–Cys-199, and Cys-88–Cys-126. 2 N-linked (GlcNAc...) asparagine glycosylation sites follow: Asn-96 and Asn-174.

It belongs to the IL-6 superfamily. Heterodimer with IL12B; disulfide-linked. This heterodimer is known as interleukin IL-12. Heterodimer with EBI3/IL27B; not disulfide-linked. This heterodimer is known as interleukin IL-35. Interacts with NBR1; this interaction promotes IL-12 secretion.

The protein localises to the secreted. Its function is as follows. Heterodimerizes with IL12B to form the IL-12 cytokine or with EBI3/IL27B to form the IL-35 cytokine. IL-12 is primarily produced by professional antigen-presenting cells (APCs) such as B-cells and dendritic cells (DCs) as well as macrophages and granulocytes and regulates T-cell and natural killer-cell responses, induces the production of interferon-gamma (IFN-gamma), favors the differentiation of T-helper 1 (Th1) cells and is an important link between innate resistance and adaptive immunity. Mechanistically, exerts its biological effects through a receptor composed of IL12R1 and IL12R2 subunits. Binding to the receptor results in the rapid tyrosine phosphorylation of a number of cellular substrates including the JAK family kinases TYK2 and JAK2. In turn, recruited STAT4 gets phosphorylated and translocates to the nucleus where it regulates cytokine/growth factor responsive genes. As part of IL-35, plays essential roles in maintaining the immune homeostasis of the liver microenvironment and also functions as an immune-suppressive cytokine. Mediates biological events through unconventional receptors composed of IL12RB2 and gp130/IL6ST heterodimers or homodimers. Signaling requires the transcription factors STAT1 and STAT4, which form a unique heterodimer that binds to distinct DNA sites. This Lama glama (Llama) protein is Interleukin-12 subunit alpha (IL12A).